The chain runs to 820 residues: G-type lectin S-receptor-like serine/threonine-protein kinase At1g11300 (820 aa).

The first 26 residues, 1-26 (MRLHESSSPFVCILVLSCFFLSVSLA), serve as a signal peptide directing secretion. In terms of domain architecture, Bulb-type lectin spans 27-150 (QERAFFSGKL…SSDAYLWESF (124 aa)). The Extracellular segment spans residues 27–436 (QERAFFSGKL…SEIKTKDKRP (410 aa)). Asparagine 37, asparagine 58, asparagine 87, asparagine 115, asparagine 123, asparagine 173, asparagine 211, asparagine 247, asparagine 256, and asparagine 282 each carry an N-linked (GlcNAc...) asparagine glycan. In terms of domain architecture, EGF-like; atypical spans 290-326 (PATECDNYRRCGEFATCNPRKNPLCSCIRGFRPRNLI). 2 disulfide bridges follow: cysteine 294–cysteine 306 and cysteine 300–cysteine 314. Residues asparagine 332 and asparagine 351 are each glycosylated (N-linked (GlcNAc...) asparagine). A PAN domain is found at 345–425 (CERQNNNGSA…SGLDLYIRLA (81 aa)). Disulfide bonds link cysteine 379–cysteine 400 and cysteine 383–cysteine 389. Residue asparagine 404 is glycosylated (N-linked (GlcNAc...) asparagine). The chain crosses the membrane as a helical span at residues 437–457 (ILIGTILAGGIFVVAACVLLA). The Cytoplasmic segment spans residues 458 to 820 (RRIVMKKRAK…NVTITDVTGR (363 aa)). The 280-residue stretch at 509 to 788 (FSLRNKLGQG…DIPEPKQPAF (280 aa)) folds into the Protein kinase domain. ATP is bound by residues 515–523 (LGQGGFGPV) and lysine 537. Positions 598-615 (RRAKLLDWKTRFNIINGI) are caM-binding. Catalysis depends on aspartate 634, which acts as the Proton acceptor.

Belongs to the protein kinase superfamily. Ser/Thr protein kinase family.

It is found in the cell membrane. It catalyses the reaction L-seryl-[protein] + ATP = O-phospho-L-seryl-[protein] + ADP + H(+). The catalysed reaction is L-threonyl-[protein] + ATP = O-phospho-L-threonyl-[protein] + ADP + H(+). This is G-type lectin S-receptor-like serine/threonine-protein kinase At1g11300 from Arabidopsis thaliana (Mouse-ear cress).